The sequence spans 157 residues: Mediator of RNA polymerase II transcription subunit 10 (157 aa).

Belongs to the Mediator complex subunit 10 family. As to quaternary structure, component of the Mediator complex, which is composed of at least 21 subunits that form three structurally distinct submodules. The Mediator head module contains MED6, MED8, MED11, SRB4/MED17, SRB5/MED18, ROX3/MED19, SRB2/MED20 and SRB6/MED22, the middle module contains MED1, MED4, NUT1/MED5, MED7, CSE2/MED9, NUT2/MED10, SRB7/MED21 and SOH1/MED31, and the tail module contains MED2, PGD1/MED3, RGR1/MED14, GAL11/MED15 and SIN4/MED16. The head and the middle modules interact directly with RNA polymerase II, whereas the elongated tail module interacts with gene-specific regulatory proteins. NUT2/MED10 interacts directly with SRB7/MED21.

The protein resides in the nucleus. Functionally, component of the Mediator complex, a coactivator involved in the regulated transcription of nearly all RNA polymerase II-dependent genes. Mediator functions as a bridge to convey information from gene-specific regulatory proteins to the basal RNA polymerase II transcription machinery. The Mediator complex, having a compact conformation in its free form, is recruited to promoters by direct interactions with regulatory proteins and serves for the assembly of a functional preinitiation complex with RNA polymerase II and the general transcription factors. The Mediator complex unfolds to an extended conformation and partially surrounds RNA polymerase II, specifically interacting with the unphosphorylated form of the C-terminal domain (CTD) of RNA polymerase II. The Mediator complex dissociates from the RNA polymerase II holoenzyme and stays at the promoter when transcriptional elongation begins. The chain is Mediator of RNA polymerase II transcription subunit 10 (NUT2) from Saccharomyces cerevisiae (strain ATCC 204508 / S288c) (Baker's yeast).